A 304-amino-acid polypeptide reads, in one-letter code: Putative HTH-type transcriptional regulatory protein Memar_2347 (304 aa).

An HTH cro/C1-type domain is found at 132–189 (LREVRERFRMSLGDLASHLGVSRRTISKYESGMGTTLDVAIKLEEIFNAPLVETIELL). A DNA-binding region (H-T-H motif) is located at residues 143-162 (LGDLASHLGVSRRTISKYES).

In Methanoculleus marisnigri (strain ATCC 35101 / DSM 1498 / JR1), this protein is Putative HTH-type transcriptional regulatory protein Memar_2347.